The following is a 304-amino-acid chain: D-alanine--D-alanine ligase (304 aa).

One can recognise an ATP-grasp domain in the interval 104 to 299; that stretch reads KMVWLSCGLP…FEALCLAILA (196 aa). 130 to 185 serves as a coordination point for ATP; the sequence is ARDLGLPIFVKPVHEGSSMGATKVTEAGQLRAAWELAARYDSLVIAEEFISGQELT. Positions 253, 266, and 268 each coordinate Mg(2+).

Belongs to the D-alanine--D-alanine ligase family. It depends on Mg(2+) as a cofactor. Mn(2+) serves as cofactor.

Its subcellular location is the cytoplasm. The catalysed reaction is 2 D-alanine + ATP = D-alanyl-D-alanine + ADP + phosphate + H(+). It functions in the pathway cell wall biogenesis; peptidoglycan biosynthesis. In terms of biological role, cell wall formation. The polypeptide is D-alanine--D-alanine ligase (Azoarcus sp. (strain BH72)).